The following is a 436-amino-acid chain: D-aminoacyl-tRNA deacylase (436 aa).

This sequence belongs to the DtdA deacylase family. Monomer. Requires Zn(2+) as cofactor.

The enzyme catalyses a D-aminoacyl-tRNA + H2O = a tRNA + a D-alpha-amino acid + H(+). It carries out the reaction glycyl-tRNA(Ala) + H2O = tRNA(Ala) + glycine + H(+). Functionally, D-aminoacyl-tRNA deacylase with broad substrate specificity. By recycling D-aminoacyl-tRNA to D-amino acids and free tRNA molecules, this enzyme counteracts the toxicity associated with the formation of D-aminoacyl-tRNA entities in vivo. This chain is D-aminoacyl-tRNA deacylase, found in Methanoregula boonei (strain DSM 21154 / JCM 14090 / 6A8).